A 531-amino-acid polypeptide reads, in one-letter code: MAAVKTLNPKAEVARAQAALAVNISAARGLQDVLRTNLGPKGTMKMLVSGAGDIKLTKDGNVLLHEMQIQHPTASLIAKVATAQDDITGDGTTSNVLIIGELLKQADLYISEGLHPRIITEGFEAAKEKALQFLEQVKVSKEMDRETLIDVARTSLRTKVHAELADVLTEAVVDSILAIKKQDEPIDLFMVEIMEMKHKSETDTSLIRGLVLDHGARHPDMKKRVEDAYILTCNVSLEYEKTEVNSGFFYKSAEEREKLVKAERKFIEDRVKKIIELKKKVCGDSDKGFVVINQKGIDPFSLDALAKEGIIALRRAKRRNMERLTLACGGIALNSLDDLNPDCLGHAGLVYEYTLGEEKFTFIEKCNNPRSVTLLIKGPNKHTLTQIKDAIRDGLRAVKNAIDDGCVVPGAGAVEVAMAEALVKYKPSVKGRAQLGVQAFADALLIIPKVLAQNSGFDLQETLVKVQAEHSESGQLVGVDLNTGEPMVAAEAGIWDNYCVKKQLLHSCTVIATNILLVDEIMRAGMSSLKG.

Position 2 is an N-acetylalanine (Ala2). Residue Lys5 is modified to N6-acetyllysine. Residue Gly39 participates in ADP binding. ATP is bound at residue Gly39. Position 90 (Asp90) interacts with Mg(2+). ADP-binding residues include Gly91, Thr92, Thr93, Ser94, Thr158, and Lys159. ATP-binding residues include Gly91, Thr92, and Thr93. Residue Lys199 is modified to N6-acetyllysine. Ser205 bears the Phosphoserine mark. A Glycyl lysine isopeptide (Lys-Gly) (interchain with G-Cter in SUMO2) cross-link involves residue Lys251. An N6-acetyllysine mark is found at Lys287, Lys365, Lys377, and Lys388. Residue Ala411 coordinates ADP. ATP contacts are provided by Ala411, Gly412, Asp496, and Lys501. An ADP-binding site is contributed by Asp496.

The protein belongs to the TCP-1 chaperonin family. Component of the chaperonin-containing T-complex (TRiC), a hexadecamer composed of two identical back-to-back stacked rings enclosing a protein folding chamber. Each ring is made up of eight different subunits: TCP1/CCT1, CCT2, CCT3, CCT4, CCT5, CCT6A/CCT6, CCT7, CCT8. Interacts with PACRG.

It is found in the cytoplasm. The catalysed reaction is ATP + H2O = ADP + phosphate + H(+). Component of the chaperonin-containing T-complex (TRiC), a molecular chaperone complex that assists the folding of actin, tubulin and other proteins upon ATP hydrolysis. The TRiC complex mediates the folding of WRAP53/TCAB1, thereby regulating telomere maintenance. The sequence is that of T-complex protein 1 subunit zeta (CCT6A) from Bos taurus (Bovine).